The primary structure comprises 768 residues: MHAIAGLTGFLAGVSLSYAAPTQENITSDAYFYGQSPAVYPSPEGTGSGAWASAYEKAKAFVANLTPEEKVNLTAGTDADNGCSGNIPAIPRLNFPGLCVSDAGNGLRSTDHVNAWSSGIHTGASWNKDLAQKRGLHMGSEYHKKGVNVLLGPVVGPLGRIAEGGRNWEGFSVDPYHSGLLVYETIRGIQAAGVGTSTKHYIANEQETNRNPESTDGIDVAAVSSNIDDKTMHELYLWPFQDVVRAGSVSIMCSYQRINNSYGCQNSKTLNGLLKTELGFQGYVMTDWGAQHGGIASSNAGLDMVMPSSTLWNSNLTDAIANGTMEASRLDDMATRIIASWYQMNQDAGFPSPGIGMPADVYAPHQAIIGKSSDSRKVLLQSAIEGHVLVKNKNNTLPLKSPEMISVFGYDAKGPDSLGFALEWLSYSPAIQPNHTLIVGGGSGGNSPAYISAPLDALQQQVIEDGSSILWNISAQDPEVDPNTDACLVFINSYATEGYDRAGLVDEGSDELVTNVASKCSNTIVTIHNAGIRLVNNWIDHENVTAVIFAHLPGQDSGRALVELLYGRSNPSGKLPYTVAKNADDYGALLHPKLPEGQYGLFPQDDFSEGVYIDYRAFDKQGIEPQFEFGFGLSYTTFDYSGLNIGQVSDNSTSRYPPSAAIQEGGNPHLWDVILRVSVDITNSGPVAGDEVAQLYVGIPNGPVRQLRGFEKVNIPVGQTVTVEFALGRRDLSTWDVVAQEWLLQSGTYQVYVGRSSRDLPLQGEFTI.

The N-terminal stretch at 1-19 (MHAIAGLTGFLAGVSLSYA) is a signal peptide. Residues Asn-25, Asn-72, and Asn-259 are each glycosylated (N-linked (GlcNAc...) asparagine). Residue Asp-287 is part of the active site. Residues Asn-315, Asn-322, Asn-394, Asn-434, Asn-472, Asn-543, and Asn-651 are each glycosylated (N-linked (GlcNAc...) asparagine).

This sequence belongs to the glycosyl hydrolase 3 family.

It localises to the secreted. It catalyses the reaction Hydrolysis of terminal, non-reducing beta-D-glucosyl residues with release of beta-D-glucose.. It participates in glycan metabolism; cellulose degradation. Functionally, beta-glucosidases are one of a number of cellulolytic enzymes involved in the degradation of cellulosic biomass. Catalyzes the last step releasing glucose from the inhibitory cellobiose. The sequence is that of Probable beta-glucosidase M (bglM) from Aspergillus flavus (strain ATCC 200026 / FGSC A1120 / IAM 13836 / NRRL 3357 / JCM 12722 / SRRC 167).